The following is a 759-amino-acid chain: MTMKKSIIAFPRIGSNRELKFALEKYFRKEITEEELQTVAKEIRLENWKSQKEAGIDSPISNDFSFYDQTLDLSIALGAIPGSYKNLELSELDTLFALARGFQDEQNDVKARPMKKWFNTNYHYLVPEINKDTIIKANFSKLLNEYKEAKSAGFETRPTIIGPYTFLVLADYKSGATKDTVLSDVIVAFQTLLKELNQLGVEWLQIEEPALVLDQTEEEKKLFVSIYEELLKSKNNLNILLQTYFGDVRDSYKEIIKLDFDGIGLDFIEGRDSLALIQKYGFPKKKILFAGLVNGKNIWRNNYQKTLELLTALDEVADIVINTSCSLQHVPVTIKNETKLSKEILKHFSFATEKLNEIDEISDIYFNKNTSFLKKNVELFENERVRENSKLKQKLDKLTEKDFTRQPSLVERRASQSQSLNLPVLPTTTIGSFPQTAEVRKVRLQNKRGELRQADYDTFLEEKIKECLKLQEDIGLDVLVHGEFERNDMVEYFGEKLEGYVFTQKAWVQSYGTRCVKPPIVWTDVTRPEAMTVRWSAYAQSQTSKPVKGMLTGPVTILNWSFPREDISLKASTLQLALAVQEEVLDLEKAGIKIIQIDEAALREKLPLRKSDWYKEYLDWAIPAFRLVHSKVKPETQIHTHMCYSEFEDIIPSIDAMDADVISFEASRSELSIIDALKAHHFKTLVGPGVYDIHSPRIPSVKEIQNQLEKILDKLPIEQVWVNPDCGLKTRGNAETIPSLRHLVEATRVLRKEKVVYDK.

Residues 17-20 (RELK) and lysine 116 each bind 5-methyltetrahydropteroyltri-L-glutamate. Residues 430–432 (IGS) and glutamate 483 each bind L-homocysteine. L-methionine-binding positions include 430-432 (IGS) and glutamate 483. 5-methyltetrahydropteroyltri-L-glutamate contacts are provided by residues 514-515 (RC) and tryptophan 560. Residue aspartate 598 participates in L-homocysteine binding. Aspartate 598 is an L-methionine binding site. Glutamate 604 contributes to the 5-methyltetrahydropteroyltri-L-glutamate binding site. Histidine 641, cysteine 643, and glutamate 665 together coordinate Zn(2+). Histidine 694 acts as the Proton donor in catalysis. Residue cysteine 726 participates in Zn(2+) binding.

This sequence belongs to the vitamin-B12 independent methionine synthase family. Zn(2+) is required as a cofactor.

The catalysed reaction is 5-methyltetrahydropteroyltri-L-glutamate + L-homocysteine = tetrahydropteroyltri-L-glutamate + L-methionine. It participates in amino-acid biosynthesis; L-methionine biosynthesis via de novo pathway; L-methionine from L-homocysteine (MetE route): step 1/1. In terms of biological role, catalyzes the transfer of a methyl group from 5-methyltetrahydrofolate to homocysteine resulting in methionine formation. This Lactococcus lactis subsp. lactis (strain IL1403) (Streptococcus lactis) protein is 5-methyltetrahydropteroyltriglutamate--homocysteine methyltransferase.